A 291-amino-acid polypeptide reads, in one-letter code: Acetyl-coenzyme A carboxylase carboxyl transferase subunit beta (291 aa).

Residues 1–23 (MSWLSKLMPSGIRTDNTPSKKRS) are disordered. A CoA carboxyltransferase N-terminal domain is found at 28-291 (LWEKCSNCGS…LGRQPAPEVA (264 aa)). C32, C35, C51, and C54 together coordinate Zn(2+). The C4-type zinc-finger motif lies at 32 to 54 (CSNCGSALYRPELEENLEVCPKC).

It belongs to the AccD/PCCB family. As to quaternary structure, acetyl-CoA carboxylase is a heterohexamer composed of biotin carboxyl carrier protein (AccB), biotin carboxylase (AccC) and two subunits each of ACCase subunit alpha (AccA) and ACCase subunit beta (AccD). Requires Zn(2+) as cofactor.

Its subcellular location is the cytoplasm. The catalysed reaction is N(6)-carboxybiotinyl-L-lysyl-[protein] + acetyl-CoA = N(6)-biotinyl-L-lysyl-[protein] + malonyl-CoA. Its pathway is lipid metabolism; malonyl-CoA biosynthesis; malonyl-CoA from acetyl-CoA: step 1/1. Component of the acetyl coenzyme A carboxylase (ACC) complex. Biotin carboxylase (BC) catalyzes the carboxylation of biotin on its carrier protein (BCCP) and then the CO(2) group is transferred by the transcarboxylase to acetyl-CoA to form malonyl-CoA. The polypeptide is Acetyl-coenzyme A carboxylase carboxyl transferase subunit beta (Stenotrophomonas maltophilia (strain R551-3)).